Consider the following 943-residue polypeptide: UvrABC system protein A (943 aa).

31–38 (GLSGSGKS) serves as a coordination point for ATP. A C4-type zinc finger spans residues 253–280 (CPHCGYSVPELEPRLFSFNNPAGACPTC). 2 ABC transporter domains span residues 310-587 (WDRR…PHSI) and 607-937 (LDKK…RFLK). 640–647 (GVSGSGKS) provides a ligand contact to ATP. The C4-type zinc finger occupies 740–766 (CEACQGDGVIKVEMHFLPDVYVPCEQC).

Belongs to the ABC transporter superfamily. UvrA family. As to quaternary structure, forms a heterotetramer with UvrB during the search for lesions.

The protein localises to the cytoplasm. In terms of biological role, the UvrABC repair system catalyzes the recognition and processing of DNA lesions. UvrA is an ATPase and a DNA-binding protein. A damage recognition complex composed of 2 UvrA and 2 UvrB subunits scans DNA for abnormalities. When the presence of a lesion has been verified by UvrB, the UvrA molecules dissociate. The sequence is that of UvrABC system protein A from Pasteurella multocida (strain Pm70).